The sequence spans 198 residues: DnaJ homolog subfamily C member 12 (198 aa).

The residue at position 1 (Met1) is an N-acetylmethionine. Residues 14-79 (DYYALLGCDE…ESRARYDHWR (66 aa)) form the J domain. Positions 114–177 (EGSGQTFTSS…GLSDLNCGHL (64 aa)) are disordered. Over residues 116–125 (SGQTFTSSVP) the composition is skewed to polar residues. A compositionally biased stretch (basic and acidic residues) spans 126-156 (NKERSEQRETKKGDPDSNPEKMKQKEPKFPE). A phosphoserine mark is found at Ser160, Ser166, and Ser182.

In terms of assembly, interacts with HSPA8. Interacts with TPH1. Interacts with TPH2. As to expression, highest levels of expression are detected in kidney, pineal gland, and raphe nuclei in the brain where it localizes to serotonerigic neurons.

The protein localises to the cytoplasm. Probable co-chaperone that participates in the proper folding of biopterin-dependent aromatic amino acid hydroxylases, which include phenylalanine-4-hydroxylase (PAH), tyrosine 3-monooxygenase (TH) and peripheral and neuronal tryptophan hydroxylases (TPH1 and TPH2). This Mus musculus (Mouse) protein is DnaJ homolog subfamily C member 12 (Dnajc12).